A 360-amino-acid polypeptide reads, in one-letter code: Phospho-N-acetylmuramoyl-pentapeptide-transferase (360 aa).

10 helical membrane passes run 26-46, 72-92, 94-114, 132-152, 168-188, 199-219, 236-256, 263-283, 288-308, and 338-358; these read AIVS…RMIA, PTMG…LWAY, SNPY…IGFV, WKYF…YLAG, VMPQ…VGTG, GLAI…AWAT, AGEL…FLWF, VFMG…IAVL, FLLV…ILQV, and VIVR…ATLK.

The protein belongs to the glycosyltransferase 4 family. MraY subfamily. Requires Mg(2+) as cofactor.

The protein resides in the cell inner membrane. The catalysed reaction is UDP-N-acetyl-alpha-D-muramoyl-L-alanyl-gamma-D-glutamyl-meso-2,6-diaminopimeloyl-D-alanyl-D-alanine + di-trans,octa-cis-undecaprenyl phosphate = di-trans,octa-cis-undecaprenyl diphospho-N-acetyl-alpha-D-muramoyl-L-alanyl-D-glutamyl-meso-2,6-diaminopimeloyl-D-alanyl-D-alanine + UMP. It functions in the pathway cell wall biogenesis; peptidoglycan biosynthesis. In terms of biological role, catalyzes the initial step of the lipid cycle reactions in the biosynthesis of the cell wall peptidoglycan: transfers peptidoglycan precursor phospho-MurNAc-pentapeptide from UDP-MurNAc-pentapeptide onto the lipid carrier undecaprenyl phosphate, yielding undecaprenyl-pyrophosphoryl-MurNAc-pentapeptide, known as lipid I. In Klebsiella pneumoniae (strain 342), this protein is Phospho-N-acetylmuramoyl-pentapeptide-transferase.